Consider the following 83-residue polypeptide: Glutaredoxin 3 (83 aa).

One can recognise a Glutaredoxin domain in the interval 2–83 (ANVEIYTKET…ARGGLDPLLK (82 aa)). Residues Cys-12 and Cys-15 are joined by a disulfide bond.

This sequence belongs to the glutaredoxin family. Monomer.

In terms of biological role, the disulfide bond functions as an electron carrier in the glutathione-dependent synthesis of deoxyribonucleotides by the enzyme ribonucleotide reductase. In addition, it is also involved in reducing some disulfides in a coupled system with glutathione reductase. This is Glutaredoxin 3 (grxC) from Escherichia coli O157:H7.